Consider the following 137-residue polypeptide: Basic phospholipase A2 2 (137 aa).

The signal sequence occupies residues Leu-1–Ala-11. The propeptide occupies Ala-12–Leu-19. 7 disulfides stabilise this stretch: Cys-30–Cys-89, Cys-44–Cys-136, Cys-46–Cys-62, Cys-61–Cys-117, Cys-68–Cys-110, Cys-78–Cys-103, and Cys-96–Cys-108. Ca(2+) contacts are provided by Tyr-45 and Gly-47. Tyr-48 serves as a coordination point for alpha-D-mannopyranose. A Ca(2+)-binding site is contributed by Gly-49. Residue His-65 is part of the active site. Position 66 (Asp-66) interacts with Ca(2+). Asp-66 lines the alpha-D-mannopyranose pocket. The active site involves Asp-111.

This sequence belongs to the phospholipase A2 family. Group I subfamily. D49 sub-subfamily. As to quaternary structure, homodimer; non-covalently linked. Ca(2+) is required as a cofactor. Homodimerization and interaction of the catalytically important Asp-49 (here Asp-111) with mannose molecules may render this protein inactive. As to expression, expressed by the venom gland.

The protein localises to the secreted. It carries out the reaction a 1,2-diacyl-sn-glycero-3-phosphocholine + H2O = a 1-acyl-sn-glycero-3-phosphocholine + a fatty acid + H(+). In terms of biological role, snake venom phospholipase A2 (PLA2) that shows anticoagulant and neurotoxic activities. Functionally, PLA2 catalyzes the calcium-dependent hydrolysis of the 2-acyl groups in 3-sn-phosphoglycerides. This is Basic phospholipase A2 2 from Bungarus caeruleus (Indian krait).